Reading from the N-terminus, the 268-residue chain is Shikimate dehydrogenase (NADP(+)) (268 aa).

Shikimate is bound by residues serine 14–serine 16 and threonine 61. Lysine 65 serves as the catalytic Proton acceptor. The shikimate site is built by asparagine 86 and aspartate 102. Residues glycine 126–alanine 130, asparagine 149–lysine 154, and methionine 213 contribute to the NADP(+) site. A shikimate-binding site is contributed by tyrosine 215. Residue glycine 238 coordinates NADP(+).

Belongs to the shikimate dehydrogenase family. In terms of assembly, homodimer.

The enzyme catalyses shikimate + NADP(+) = 3-dehydroshikimate + NADPH + H(+). Its pathway is metabolic intermediate biosynthesis; chorismate biosynthesis; chorismate from D-erythrose 4-phosphate and phosphoenolpyruvate: step 4/7. Involved in the biosynthesis of the chorismate, which leads to the biosynthesis of aromatic amino acids. Catalyzes the reversible NADPH linked reduction of 3-dehydroshikimate (DHSA) to yield shikimate (SA). The chain is Shikimate dehydrogenase (NADP(+)) from Haemophilus influenzae (strain PittGG).